The primary structure comprises 221 residues: Transmembrane emp24 domain-containing protein 3 (221 aa).

The signal sequence occupies residues 1-25 (MVHEAPHASSFQMLLQLLLLLLLRA). Residues 28-184 (LRSAELTFEL…RAEDLNSRVS (157 aa)) lie on the Lumenal side of the membrane. The 83-residue stretch at 42 to 124 (KQCFHEEVEQ…HKTVYFDFQV (83 aa)) folds into the GOLD domain. At arginine 103 the chain carries Dimethylated arginine. The helical transmembrane segment at 185-205 (YWSVGETIALFVVSFSQVLLL) threads the bilayer. Residues 206–221 (KSFFTEKRPVNRAVHS) are Cytoplasmic-facing. Residues 208–209 (FF) carry the COPII vesicle coat-binding motif. The short motif at 208 to 221 (FFTEKRPVNRAVHS) is the COPI vesicle coat-binding element.

Belongs to the EMP24/GP25L family. As to quaternary structure, monomer in endoplasmic reticulum, endoplasmic reticulum-Golgi intermediate compartment and cis-Golgi network. Interacts (via C-terminus) with COPG1; the interaction involves dimeric TMED3; however, there are conflicting reports on the interaction. Interacts with GORASP1 and GORASP2.

The protein resides in the endoplasmic reticulum-Golgi intermediate compartment membrane. The protein localises to the golgi apparatus. It is found in the cis-Golgi network membrane. Its subcellular location is the golgi stack membrane. It localises to the endoplasmic reticulum membrane. The protein resides in the cytoplasmic vesicle. The protein localises to the COPI-coated vesicle membrane. Potential role in vesicular protein trafficking, mainly in the early secretory pathway. Contributes to the coupled localization of TMED2 and TMED10 in the cis-Golgi network. The chain is Transmembrane emp24 domain-containing protein 3 (Tmed3) from Mus musculus (Mouse).